A 375-amino-acid chain; its full sequence is MLEANVYDNFNPNYYNISDFSMPNGKKEKRGLPIPKARCQVINYELWETGYLYTSSATLTVSVEVGDIVQILFPEVVPIEEALGKKKKLNLDMVYLVTDVDESNKATLKNYFWAMIESLDVPNAITKTTNFAIIDYLIDPNKNNLMSYGYFFNSSIFAGKATINRKAETSSAHDVAKRIFSKVQFQPTTTIQHAPSETDPRNLLFINFASRNWNRKRITTRVDIKQSVTMDTETIVERSAYNFAVVFVKNKATDDYTDPPKMYIAKNNGDVIDYSTYHGDGTDLPDVRTAKTLFYDRDDHGNPPELSTIKVEISPSTIVTRLIFNQNELLPLYVNDLVDIWYEGKLYSGYIADRVKTEFNDRLIFVESGDKPNVI.

This sequence belongs to the skunalikevirus baseplate protein gp16 family. Homotrimer.

The protein localises to the virion. Its function is as follows. Forms a dome thereby closing the central channel at the end of the baseplate. Changes its conformation upon activation by calcium allowing the channel to open at the bottom of the baseplate for DNA ejection. In Lactococcus lactis (Lactococcus lactis bacteriophage p2), this protein is Baseplate protein gp16.